We begin with the raw amino-acid sequence, 447 residues long: Methylenetetrahydrofolate--tRNA-(uracil-5-)-methyltransferase TrmFO (447 aa).

Gly8–Gly13 contributes to the FAD binding site. The segment at Asn398–Arg421 is disordered. A compositionally biased stretch (basic and acidic residues) spans Pro406–Gln417.

It belongs to the MnmG family. TrmFO subfamily. The cofactor is FAD.

The protein resides in the cytoplasm. It catalyses the reaction uridine(54) in tRNA + (6R)-5,10-methylene-5,6,7,8-tetrahydrofolate + NADH + H(+) = 5-methyluridine(54) in tRNA + (6S)-5,6,7,8-tetrahydrofolate + NAD(+). The enzyme catalyses uridine(54) in tRNA + (6R)-5,10-methylene-5,6,7,8-tetrahydrofolate + NADPH + H(+) = 5-methyluridine(54) in tRNA + (6S)-5,6,7,8-tetrahydrofolate + NADP(+). Its function is as follows. Catalyzes the folate-dependent formation of 5-methyl-uridine at position 54 (M-5-U54) in all tRNAs. The polypeptide is Methylenetetrahydrofolate--tRNA-(uracil-5-)-methyltransferase TrmFO (Rubrobacter xylanophilus (strain DSM 9941 / JCM 11954 / NBRC 16129 / PRD-1)).